Reading from the N-terminus, the 96-residue chain is Signal recognition particle 19 kDa protein (96 aa).

This sequence belongs to the SRP19 family. As to quaternary structure, part of the signal recognition particle protein translocation system, which is composed of SRP and FtsY. Archaeal SRP consists of a 7S RNA molecule of 300 nucleotides and two protein subunits: SRP54 and SRP19.

It localises to the cytoplasm. Involved in targeting and insertion of nascent membrane proteins into the cytoplasmic membrane. Binds directly to 7S RNA and mediates binding of the 54 kDa subunit of the SRP. The protein is Signal recognition particle 19 kDa protein of Pyrobaculum arsenaticum (strain DSM 13514 / JCM 11321 / PZ6).